A 618-amino-acid chain; its full sequence is Matrix metalloproteinase-24 (618 aa).

The N-terminal stretch at methionine 1–glycine 41 is a signal peptide. Positions alanine 42–arginine 128 are excised as a propeptide. Over alanine 42–alanine 575 the chain is Extracellular. Positions proline 110–histidine 117 match the Cysteine switch motif. Positions 112 and 255 each coordinate Zn(2+). The active site involves glutamate 256. Zn(2+) contacts are provided by histidine 259 and histidine 265. Residues glutamine 296–isoleucine 352 form a disordered region. Over residues proline 302 to threonine 314 the composition is skewed to pro residues. 4 Hemopexin repeats span residues proline 350–leucine 398, proline 399–leucine 444, arginine 446–proline 494, and glutamine 495–cysteine 542. Cysteine 353 and cysteine 542 are joined by a disulfide. A helical membrane pass occupies residues valine 576–phenylalanine 596. Residues glutamine 597–valine 618 are Cytoplasmic-facing. A PDZ-binding motif is present at residues glutamate 616–valine 618.

Belongs to the peptidase M10A family. Interacts with GRIP1 and GRIP2. Interacts (via PDZ-binding motif) with APBA3 (via PDZ domain). Zn(2+) serves as cofactor. Requires Ca(2+) as cofactor. In terms of processing, cleaved by a furin endopeptidase in the trans-Golgi network. Mainly expressed in neuronal cells of both central and peripheral nervous systems. Expressed by CGRP-containing peptidergic nociceptors in dorsal root ganglia. Expressed in adult neural stem cell and ependymocytes. Expressed at low level in testis.

It localises to the cell membrane. The protein localises to the golgi apparatus. Its subcellular location is the trans-Golgi network membrane. The protein resides in the secreted. It is found in the extracellular space. It localises to the extracellular matrix. In terms of biological role, metalloprotease that mediates cleavage of N-cadherin (CDH2) and acts as a regulator of neuro-immune interactions and neural stem cell quiescence. Involved in cell-cell interactions between nociceptive neurites and mast cells, possibly by mediating cleavage of CDH2, thereby acting as a mediator of peripheral thermal nociception and inflammatory hyperalgesia. Key regulator of neural stem cells quiescence by mediating cleavage of CDH2, affecting CDH2-mediated anchorage of neural stem cells to ependymocytes in the adult subependymal zone, leading to modulate their quiescence. May play a role in axonal growth. Able to activate progelatinase A. May also be a proteoglycanase involved in degradation of proteoglycans, such as dermatan sulfate and chondroitin sulfate proteoglycans. Cleaves partially fibronectin, but not collagen type I, nor laminin. This Mus musculus (Mouse) protein is Matrix metalloproteinase-24 (Mmp24).